The chain runs to 368 residues: Molybdenum import ATP-binding protein ModC (368 aa).

Positions 1–230 constitute an ABC transporter domain; sequence MTIKIQFKQT…HAMRPWQSFS (230 aa). An ATP-binding site is contributed by 32 to 39; the sequence is GRSGAGKT. The Mop domain occupies 291 to 362; the sequence is ATSIRNVLPA…VKGVSVTQRD (72 aa).

Belongs to the ABC transporter superfamily. Molybdate importer (TC 3.A.1.8) family. The complex is composed of two ATP-binding proteins (ModC), two transmembrane proteins (ModB) and a solute-binding protein (ModA).

It is found in the cell inner membrane. It carries out the reaction molybdate(out) + ATP + H2O = molybdate(in) + ADP + phosphate + H(+). Functionally, part of the ABC transporter complex ModABC involved in molybdenum import. Responsible for energy coupling to the transport system. The chain is Molybdenum import ATP-binding protein ModC from Vibrio parahaemolyticus serotype O3:K6 (strain RIMD 2210633).